We begin with the raw amino-acid sequence, 475 residues long: Sulfate adenylyltransferase subunit 1 (475 aa).

In terms of domain architecture, tr-type G spans 25-239 (KSLLRFLTCG…EVLETVEIQR (215 aa)). Residues 34–41 (GSVDDGKS) form a G1 region. 34-41 (GSVDDGKS) contributes to the GTP binding site. The G2 stretch occupies residues 92-96 (GITID). The tract at residues 113 to 116 (DTPG) is G3. GTP-binding positions include 113 to 117 (DTPGH) and 168 to 171 (NKMD). The tract at residues 168 to 171 (NKMD) is G4. Residues 206–208 (SAL) form a G5 region.

Belongs to the TRAFAC class translation factor GTPase superfamily. Classic translation factor GTPase family. CysN/NodQ subfamily. Heterodimer composed of CysD, the smaller subunit, and CysN.

The enzyme catalyses sulfate + ATP + H(+) = adenosine 5'-phosphosulfate + diphosphate. Its pathway is sulfur metabolism; hydrogen sulfide biosynthesis; sulfite from sulfate: step 1/3. In terms of biological role, with CysD forms the ATP sulfurylase (ATPS) that catalyzes the adenylation of sulfate producing adenosine 5'-phosphosulfate (APS) and diphosphate, the first enzymatic step in sulfur assimilation pathway. APS synthesis involves the formation of a high-energy phosphoric-sulfuric acid anhydride bond driven by GTP hydrolysis by CysN coupled to ATP hydrolysis by CysD. This Escherichia coli (strain ATCC 8739 / DSM 1576 / NBRC 3972 / NCIMB 8545 / WDCM 00012 / Crooks) protein is Sulfate adenylyltransferase subunit 1.